Consider the following 354-residue polypeptide: Ornithine transcarbamylase, mitochondrial (354 aa).

A mitochondrion-targeting transit peptide spans 1–32 (MLFNLRILLNNAAFRNGHNFMVRNFRCGQPLQ). Lys-70 bears the N6-acetyllysine; alternate mark. At Lys-70 the chain carries N6-succinyllysine; alternate. The residue at position 80 (Lys-80) is an N6-succinyllysine. At Lys-88 the chain carries N6-acetyllysine; alternate. The residue at position 88 (Lys-88) is an N6-succinyllysine; alternate. A carbamoyl phosphate-binding site is contributed by 90–93 (STRT). Ser-133 is subject to Phosphoserine. Arg-141 serves as a coordination point for carbamoyl phosphate. Lys-144 is modified (N6-acetyllysine; alternate). At Lys-144 the chain carries N6-succinyllysine; alternate. Residues His-168 and Gln-171 each contribute to the carbamoyl phosphate site. Residue Asn-199 participates in L-ornithine binding. 3 positions are modified to N6-acetyllysine; alternate: Lys-221, Lys-231, and Lys-238. An N6-succinyllysine; alternate mark is found at Lys-221, Lys-231, and Lys-238. Lys-243 carries the post-translational modification N6-acetyllysine. 3 residues coordinate L-ornithine: Asp-263, Ser-267, and Met-268. Lys-274 and Lys-289 each carry N6-succinyllysine. Lys-292 bears the N6-acetyllysine; alternate mark. Lys-292 is modified (N6-succinyllysine; alternate). Cys-303 (proton acceptor) is an active-site residue. 303 to 304 (CL) provides a ligand contact to carbamoyl phosphate. Residue Lys-307 is modified to N6-acetyllysine; alternate. The residue at position 307 (Lys-307) is an N6-succinyllysine; alternate. Arg-330 is a binding site for carbamoyl phosphate.

This sequence belongs to the aspartate/ornithine carbamoyltransferase superfamily. OTCase family. In terms of assembly, homotrimer. Post-translationally, acetylation at Lys-88 negatively regulates ornithine carbamoyltransferase activity in response to nutrient signals. In terms of tissue distribution, mainly expressed in liver and intestinal mucosa.

The protein localises to the mitochondrion matrix. It catalyses the reaction carbamoyl phosphate + L-ornithine = L-citrulline + phosphate + H(+). The protein operates within nitrogen metabolism; urea cycle; L-citrulline from L-ornithine and carbamoyl phosphate: step 1/1. Its activity is regulated as follows. Negatively regulated by lysine acetylation. Catalyzes the second step of the urea cycle, the condensation of carbamoyl phosphate with L-ornithine to form L-citrulline. The urea cycle ensures the detoxification of ammonia by converting it to urea for excretion. In Homo sapiens (Human), this protein is Ornithine transcarbamylase, mitochondrial.